We begin with the raw amino-acid sequence, 233 residues long: MGQKVHPNGFRLGIIKYWNSTWYANKKEFAQYLNSDFKVRQFLASELTKASISRVVIERPAKSIRITIHTARPGIIIGKKGEDVEKLRKSISLIAGVPSQINIAEVRKPELNAKLVAESIVSQIERRVIFRRAMKRAVQNTIRLGAKGIKVEVSGRLSGVEIARTEWYREGRVPLHTLRADIDYHVSEAHTTYGVIGVKVWIFKGEILDGMMAVEPTIESITPPKTQQRKGRK.

Residues 39 to 107 (VRQFLASELT…PSQINIAEVR (69 aa)) enclose the KH type-2 domain.

This sequence belongs to the universal ribosomal protein uS3 family. As to quaternary structure, part of the 30S ribosomal subunit. Forms a tight complex with proteins S10 and S14.

Its function is as follows. Binds the lower part of the 30S subunit head. Binds mRNA in the 70S ribosome, positioning it for translation. This Baumannia cicadellinicola subsp. Homalodisca coagulata protein is Small ribosomal subunit protein uS3.